The following is a 399-amino-acid chain: Na(+)/H(+) antiporter NhaA (399 aa).

11 helical membrane-spanning segments follow: residues 14-34, 59-79, 95-115, 124-144, 154-174, 177-197, 213-233, 261-281, 290-310, 331-351, and 363-383; these read AGGILLMIAVALAMIMANSPL, LIHWINDGLMALFFMLIGLEV, SLPTFAAVGGMVFPAGIYLLF, AGWAIPAATDIAFALGVMALL, VFLLALAIIDDLGVVVIIAMF, TDLSMLSLIVAGIAILGLVGL, LILWIAVLKSGVHATLAGVII, FIILPIFAFANAGVDLSPMSF, VGIALGLLLGKPLGVLVFSYI, VALMCGIGFTMSMFISSLAFV, and LGILVGSFASAIIGYFWLAKV.

Belongs to the NhaA Na(+)/H(+) (TC 2.A.33) antiporter family.

It localises to the cell inner membrane. It catalyses the reaction Na(+)(in) + 2 H(+)(out) = Na(+)(out) + 2 H(+)(in). In terms of biological role, na(+)/H(+) antiporter that extrudes sodium in exchange for external protons. The chain is Na(+)/H(+) antiporter NhaA from Shewanella sediminis (strain HAW-EB3).